A 642-amino-acid chain; its full sequence is Threonine--tRNA ligase (642 aa).

In terms of domain architecture, TGS spans 1 to 61 (MPVIRFYDGS…REDAFIEFVD (61 aa)). The catalytic stretch occupies residues 243–534 (DHRKIGKFLQ…LIEECSGNLP (292 aa)). Residues Cys-334, His-385, and His-511 each contribute to the Zn(2+) site.

It belongs to the class-II aminoacyl-tRNA synthetase family. As to quaternary structure, homodimer. Zn(2+) serves as cofactor.

The protein localises to the cytoplasm. It catalyses the reaction tRNA(Thr) + L-threonine + ATP = L-threonyl-tRNA(Thr) + AMP + diphosphate + H(+). In terms of biological role, catalyzes the attachment of threonine to tRNA(Thr) in a two-step reaction: L-threonine is first activated by ATP to form Thr-AMP and then transferred to the acceptor end of tRNA(Thr). Also edits incorrectly charged L-seryl-tRNA(Thr). The chain is Threonine--tRNA ligase from Buchnera aphidicola subsp. Acyrthosiphon pisum (strain 5A).